Here is a 582-residue protein sequence, read N- to C-terminus: Threonine--tRNA ligase (582 aa).

A catalytic region spans residues 185–478 (DHRKLGKELD…LVEHYGGAFP (294 aa)). Positions 278, 329, and 455 each coordinate Zn(2+).

This sequence belongs to the class-II aminoacyl-tRNA synthetase family. Homodimer. It depends on Zn(2+) as a cofactor.

Its subcellular location is the cytoplasm. It carries out the reaction tRNA(Thr) + L-threonine + ATP = L-threonyl-tRNA(Thr) + AMP + diphosphate + H(+). Functionally, catalyzes the attachment of threonine to tRNA(Thr) in a two-step reaction: L-threonine is first activated by ATP to form Thr-AMP and then transferred to the acceptor end of tRNA(Thr). Also edits incorrectly charged L-seryl-tRNA(Thr). The polypeptide is Threonine--tRNA ligase (Borrelia garinii subsp. bavariensis (strain ATCC BAA-2496 / DSM 23469 / PBi) (Borreliella bavariensis)).